The following is an 84-amino-acid chain: Limulin (84 aa).

The Pentraxin (PTX) domain occupies Ile-6–Val-84. Ca(2+)-binding residues include Asp-67 and Asn-68.

It belongs to the pentraxin family. In terms of assembly, homopentamer. Pentraxin (or pentaxin) have a discoid arrangement of 5 non-covalently bound subunits. It depends on Ca(2+) as a cofactor. Post-translationally, a disulfide bond links Cys-38 to a Cys in the C-terminal half of the chain of 163 residues.

Its function is as follows. Lectin that binds sialic acid. Displays antiviral activity and therefore may contribute to defense against infections. This is Limulin from Limulus polyphemus (Atlantic horseshoe crab).